The following is a 742-amino-acid chain: Clamp-binding protein CrfC (742 aa).

The segment at Gln-41–Pro-45 is clamp-binding consensus. A Dynamin-type G domain is found at Ser-66–Pro-402. The G1 motif stretch occupies residues Gly-76–Ser-83. The interval Met-102–Ala-104 is G2 motif. Residues Asp-236–Gly-239 form a G3 motif region. Positions Asn-297–Asp-300 are G4 motif. The segment at Phe-331–Ser-334 is G5 motif. Residues Arg-440 to Val-472 are a coiled coil.

The protein belongs to the TRAFAC class dynamin-like GTPase superfamily. Dynamin/Fzo/YdjA family. In terms of assembly, forms homooligomers. Binds to the beta sliding clamp processivity factor (DnaN) in the presence and absence of DNA, may bind to the clamp itself as homodimers or trimers. Homooligomers may be able to bind more than 1 clamp complex.

It is found in the cytoplasm. Important for the colocalization of sister nascent DNA strands after replication fork passage during DNA replication, and for positioning and subsequent partitioning of sister chromosomes. Does not have GTPase activity on its own. The protein is Clamp-binding protein CrfC (crfC) of Escherichia coli (strain K12).